The following is a 330-amino-acid chain: RNA polymerase sigma factor RpoS (330 aa).

Residues 56–89 are sigma-70 factor domain-1; it reads DATQLYLGEIGYSPLLTAEEEVYFARRALRGDVA. The sigma-70 factor domain-2 stretch occupies residues 94-164; it reads MIESNLRLVV…ERAIMNQTRT (71 aa). The Interaction with polymerase core subunit RpoC signature appears at 118-121; sequence DLIE. The segment at 174–249 is sigma-70 factor domain-3; sequence ELNVYLRTAR…DEKENGPEDT (76 aa). The tract at residues 262–315 is sigma-70 factor domain-4; the sequence is WLFELNAKQREVLARRFGLLGYEAATLEDVGREIGLTRERVRQIQVEGLRRLRE. The segment at residues 288–307 is a DNA-binding region (H-T-H motif); sequence LEDVGREIGLTRERVRQIQV.

The protein belongs to the sigma-70 factor family. RpoS subfamily. Interacts with the RNA polymerase core enzyme.

The protein resides in the cytoplasm. Sigma factors are initiation factors that promote the attachment of RNA polymerase to specific initiation sites and are then released. This sigma factor is the master transcriptional regulator of the stationary phase and the general stress response. The polypeptide is RNA polymerase sigma factor RpoS (Shigella flexneri).